A 79-amino-acid chain; its full sequence is Conotoxin Vi6.3 (79 aa).

The signal sequence occupies residues Met1–Ala22. Positions Asp23 to Arg47 are excised as a propeptide. 3 disulfide bridges follow: Cys49–Cys62, Cys56–Cys67, and Cys61–Cys77. Residues Pro60 and Pro63 each carry the 4-hydroxyproline modification.

Belongs to the conotoxin O1 superfamily. In terms of tissue distribution, expressed by the venom duct.

It localises to the secreted. Ion channel inhibitor that inhibits the increase in intracellular calcium upon depolarization in DRG neurons. In vivo, both intraperitoneal and intracranial injections into mice induce hyperactivity. This is Conotoxin Vi6.3 from Conus virgo (Virgin cone).